The sequence spans 260 residues: Cell division protein FtsQ (260 aa).

The Cytoplasmic portion of the chain corresponds to 1–26 (MINKVLLEGQRITRSPQVKQHACGAS). The chain crosses the membrane as a helical span at residues 27 to 47 (FFLVVLLLIGGLLYSTISWMW). Residues 48-260 (DEQRLPLSKL…QELTQEKNDD (213 aa)) are Periplasmic-facing. Positions 52 to 122 (LPLSKLVLQG…DTIKVYLTEY (71 aa)) constitute a POTRA domain.

Belongs to the FtsQ/DivIB family. FtsQ subfamily. As to quaternary structure, part of a complex composed of FtsB, FtsL and FtsQ.

The protein resides in the cell inner membrane. Its function is as follows. Essential cell division protein. May link together the upstream cell division proteins, which are predominantly cytoplasmic, with the downstream cell division proteins, which are predominantly periplasmic. May control correct divisome assembly. The chain is Cell division protein FtsQ from Vibrio cholerae serotype O1 (strain ATCC 39315 / El Tor Inaba N16961).